The chain runs to 213 residues: Orotate phosphoribosyltransferase (213 aa).

Lysine 26 contributes to the 5-phospho-alpha-D-ribose 1-diphosphate binding site. 34–35 (FF) is a binding site for orotate. 5-phospho-alpha-D-ribose 1-diphosphate is bound by residues 72–73 (YK), arginine 99, lysine 100, lysine 103, histidine 105, and 124–132 (DDVITAGTA). Positions 128 and 156 each coordinate orotate.

This sequence belongs to the purine/pyrimidine phosphoribosyltransferase family. PyrE subfamily. As to quaternary structure, homodimer. Mg(2+) serves as cofactor.

The enzyme catalyses orotidine 5'-phosphate + diphosphate = orotate + 5-phospho-alpha-D-ribose 1-diphosphate. Its pathway is pyrimidine metabolism; UMP biosynthesis via de novo pathway; UMP from orotate: step 1/2. In terms of biological role, catalyzes the transfer of a ribosyl phosphate group from 5-phosphoribose 1-diphosphate to orotate, leading to the formation of orotidine monophosphate (OMP). The sequence is that of Orotate phosphoribosyltransferase from Shigella dysenteriae serotype 1 (strain Sd197).